A 432-amino-acid polypeptide reads, in one-letter code: Amino-acid acetyltransferase (432 aa).

One can recognise an N-acetyltransferase domain in the interval 286–425 (ESLREATIED…ASLYNYQRNS (140 aa)).

The protein belongs to the acetyltransferase family. ArgA subfamily.

The protein resides in the cytoplasm. The catalysed reaction is L-glutamate + acetyl-CoA = N-acetyl-L-glutamate + CoA + H(+). The protein operates within amino-acid biosynthesis; L-arginine biosynthesis; N(2)-acetyl-L-ornithine from L-glutamate: step 1/4. The sequence is that of Amino-acid acetyltransferase from Ectopseudomonas mendocina (strain ymp) (Pseudomonas mendocina).